Consider the following 331-residue polypeptide: DNA-directed RNA polymerase subunit alpha (331 aa).

Residues M1–N226 form an alpha N-terminal domain (alpha-NTD) region. The interval L243–N331 is alpha C-terminal domain (alpha-CTD).

Belongs to the RNA polymerase alpha chain family. As to quaternary structure, homodimer. The RNAP catalytic core consists of 2 alpha, 1 beta, 1 beta' and 1 omega subunit. When a sigma factor is associated with the core the holoenzyme is formed, which can initiate transcription.

It carries out the reaction RNA(n) + a ribonucleoside 5'-triphosphate = RNA(n+1) + diphosphate. In terms of biological role, DNA-dependent RNA polymerase catalyzes the transcription of DNA into RNA using the four ribonucleoside triphosphates as substrates. This chain is DNA-directed RNA polymerase subunit alpha, found in Clavibacter sepedonicus (Clavibacter michiganensis subsp. sepedonicus).